The sequence spans 61 residues: Chromatin protein Cren7 (61 aa).

The protein belongs to the Cren7 family. As to quaternary structure, monomer. Methylated at multiple sites, to varying extents.

Its subcellular location is the chromosome. The protein localises to the cytoplasm. A chromatin protein, binds double-stranded DNA without sequence specificity. Constrains negative DNA supercoils. This Caldivirga maquilingensis (strain ATCC 700844 / DSM 13496 / JCM 10307 / IC-167) protein is Chromatin protein Cren7.